Here is a 238-residue protein sequence, read N- to C-terminus: Large ribosomal subunit protein uL2 (238 aa).

Positions 201–238 are disordered; the sequence is PFGGGGRQHPGRPKTVSRNTPPGRKVGSIAARRTGVGH.

It belongs to the universal ribosomal protein uL2 family. In terms of assembly, part of the 50S ribosomal subunit. Forms a bridge to the 30S subunit in the 70S ribosome.

One of the primary rRNA binding proteins. Required for association of the 30S and 50S subunits to form the 70S ribosome, for tRNA binding and peptide bond formation. It has been suggested to have peptidyltransferase activity; this is somewhat controversial. Makes several contacts with the 16S rRNA in the 70S ribosome. This chain is Large ribosomal subunit protein uL2, found in Methanocella arvoryzae (strain DSM 22066 / NBRC 105507 / MRE50).